Here is a 170-residue protein sequence, read N- to C-terminus: ATP synthase subunit b (170 aa).

The chain crosses the membrane as a helical span at residues isoleucine 22–glycine 41. The interval alanine 72–arginine 98 is disordered.

It belongs to the ATPase B chain family. As to quaternary structure, F-type ATPases have 2 components, F(1) - the catalytic core - and F(0) - the membrane proton channel. F(1) has five subunits: alpha(3), beta(3), gamma(1), delta(1), epsilon(1). F(0) has four main subunits: a(1), b(1), b'(1) and c(10-14). The alpha and beta chains form an alternating ring which encloses part of the gamma chain. F(1) is attached to F(0) by a central stalk formed by the gamma and epsilon chains, while a peripheral stalk is formed by the delta, b and b' chains.

It is found in the cellular thylakoid membrane. Functionally, f(1)F(0) ATP synthase produces ATP from ADP in the presence of a proton or sodium gradient. F-type ATPases consist of two structural domains, F(1) containing the extramembraneous catalytic core and F(0) containing the membrane proton channel, linked together by a central stalk and a peripheral stalk. During catalysis, ATP synthesis in the catalytic domain of F(1) is coupled via a rotary mechanism of the central stalk subunits to proton translocation. Component of the F(0) channel, it forms part of the peripheral stalk, linking F(1) to F(0). The polypeptide is ATP synthase subunit b (Prochlorococcus marinus (strain MIT 9301)).